A 63-amino-acid chain; its full sequence is DNA gyrase inhibitor YacG (63 aa).

Residues cysteine 10, cysteine 13, cysteine 29, and cysteine 33 each coordinate Zn(2+).

This sequence belongs to the DNA gyrase inhibitor YacG family. As to quaternary structure, interacts with GyrB. Zn(2+) serves as cofactor.

Functionally, inhibits all the catalytic activities of DNA gyrase by preventing its interaction with DNA. Acts by binding directly to the C-terminal domain of GyrB, which probably disrupts DNA binding by the gyrase. The polypeptide is DNA gyrase inhibitor YacG (Chromobacterium violaceum (strain ATCC 12472 / DSM 30191 / JCM 1249 / CCUG 213 / NBRC 12614 / NCIMB 9131 / NCTC 9757 / MK)).